Here is a 450-residue protein sequence, read N- to C-terminus: Equilibrative nucleotide transporter 1 (450 aa).

11 helical membrane-spanning segments follow: residues 63 to 83 (FAYI…NAFI), 101 to 121 (IFAV…VVFY), 133 to 153 (LGLL…LVYV), 168 to 188 (AAVA…IGVA), 196 to 216 (MQAV…LRIL), 234 to 254 (LYFA…NVAH), 300 to 320 (HGFG…GYIT), 334 to 354 (ILLI…TAVF), 361 to 381 (IAVG…GCLH), 394 to 414 (ILTC…MILA), and 430 to 450 (TVMF…FWVI).

The protein belongs to the SLC29A/ENT transporter (TC 2.A.57) family. As to expression, in young seedlings, expressed in root elongation zone, root cortex, root-hair, at the transition to the shoot and cotyledons. Expressed in hydathodes of fully developed leaves and pollen.

The protein localises to the vacuole membrane. Nucleoside transporter involved in adenosine transport and required for nucleotide metabolism which influences growth and pollen germination. Has high affinity for adenosine when expressed in a heterologous system (yeast). The protein is Equilibrative nucleotide transporter 1 (ENT1) of Arabidopsis thaliana (Mouse-ear cress).